Reading from the N-terminus, the 674-residue chain is 1,4-alpha-glucan branching enzyme GlgB 1 (674 aa).

The Nucleophile role is filled by D336. E389 serves as the catalytic Proton donor.

It belongs to the glycosyl hydrolase 13 family. GlgB subfamily. Monomer.

The catalysed reaction is Transfers a segment of a (1-&gt;4)-alpha-D-glucan chain to a primary hydroxy group in a similar glucan chain.. It participates in glycan biosynthesis; glycogen biosynthesis. In terms of biological role, catalyzes the formation of the alpha-1,6-glucosidic linkages in glycogen by scission of a 1,4-alpha-linked oligosaccharide from growing alpha-1,4-glucan chains and the subsequent attachment of the oligosaccharide to the alpha-1,6 position. The chain is 1,4-alpha-glucan branching enzyme GlgB 1 from Clostridium perfringens (strain SM101 / Type A).